Here is a 126-residue protein sequence, read N- to C-terminus: Holo-[acyl-carrier-protein] synthase (126 aa).

Residues Asp-8 and Glu-59 each contribute to the Mg(2+) site.

The protein belongs to the P-Pant transferase superfamily. AcpS family. Mg(2+) serves as cofactor.

Its subcellular location is the cytoplasm. The enzyme catalyses apo-[ACP] + CoA = holo-[ACP] + adenosine 3',5'-bisphosphate + H(+). Functionally, transfers the 4'-phosphopantetheine moiety from coenzyme A to a Ser of acyl-carrier-protein. This chain is Holo-[acyl-carrier-protein] synthase, found in Rickettsia prowazekii (strain Madrid E).